An 819-amino-acid polypeptide reads, in one-letter code: Molybdenum cofactor sulfurase (819 aa).

N6-(pyridoxal phosphate)lysine is present on lysine 271. Cysteine 430 is a catalytic residue. Positions 650 to 817 (CKLLRYSSST…IGVGEEVNPD (168 aa)) constitute an MOSC domain.

It belongs to the class-V pyridoxal-phosphate-dependent aminotransferase family. MOCOS subfamily. Requires pyridoxal 5'-phosphate as cofactor. As to expression, ubiquitously expressed.

The catalysed reaction is Mo-molybdopterin + L-cysteine + AH2 = thio-Mo-molybdopterin + L-alanine + A + H2O. It participates in cofactor biosynthesis; molybdopterin biosynthesis. Its function is as follows. Sulfurates the molybdenum cofactor. Sulfation of molybdenum is essential for xanthine dehydrogenase (XDH) and aldehyde oxidase (ADO) enzymes in which molybdenum cofactor is liganded by 1 oxygen and 1 sulfur atom in active form. Modulates cold stress- and osmotic stress-responsive gene expression by acting as key regulator of abscisic acid (ABA) biosynthesis. The chain is Molybdenum cofactor sulfurase (ABA3) from Arabidopsis thaliana (Mouse-ear cress).